A 105-amino-acid chain; its full sequence is uncharacterized protein (105 aa).

The next 2 helical transmembrane spans lie at Tyr10–Gly30 and Tyr48–Ser68.

The protein resides in the membrane. This is an uncharacterized protein from Acanthamoeba polyphaga mimivirus (APMV).